Here is a 142-residue protein sequence, read N- to C-terminus: HTH-type transcriptional regulator MntR (142 aa).

The 63-residue stretch at 1–63 folds into the HTH dtxR-type domain; it reads MPTPSMEDYI…YEKYRGLILT (63 aa). Residues D8, E11, H77, E99, E102, and H103 each coordinate Mn(2+).

Belongs to the DtxR/MntR family. As to quaternary structure, homodimer.

Its subcellular location is the cytoplasm. DNA binding is strongly activated by Mn(2+). In terms of biological role, central regulator of manganese homeostasis. This is HTH-type transcriptional regulator MntR from Listeria innocua serovar 6a (strain ATCC BAA-680 / CLIP 11262).